Consider the following 25-residue polypeptide: KICQDVKQSLAPCLPYVTGRAPKPA.

In terms of tissue distribution, seeds (at protein level).

In terms of biological role, plant non-specific lipid-transfer proteins transfer phospholipids as well as galactolipids across membranes. May play a role in wax or cutin deposition in the cell walls of expanding epidermal cells and certain secretory tissues. Has antibacterial and antifungal activity. Displays antibacterial activity towards both Gram-negative bacteria, P.carotovorum (IC(50)=11.5 uM) and P.syringae (IC(50)=12.0 uM), and Gram-positive bacterium C.michiganensis subsp michiganense (IC(50)=11.2 uM). Also displays antifungal activity towards A.niger VKM F-33 (IC(50)=1.05 uM) and B.cinerea TSKHA (IC(50)=1.88 uM) and relatively moderate activity towards B.sorokiniana VKM F-1448 (IC(50)=1.55 uM). Displays some inhibitory activity towards P.infestans OSV12. This Nigella sativa (Black cumin) protein is Non-specific lipid-transfer protein 3.